We begin with the raw amino-acid sequence, 1367 residues long: DNA polymerase III PolC-type (1367 aa).

An Exonuclease domain is found at 358 to 513 (FVVLDFETTG…DDARVTAQVF (156 aa)).

This sequence belongs to the DNA polymerase type-C family. PolC subfamily.

The protein resides in the cytoplasm. It catalyses the reaction DNA(n) + a 2'-deoxyribonucleoside 5'-triphosphate = DNA(n+1) + diphosphate. Functionally, required for replicative DNA synthesis. This DNA polymerase also exhibits 3' to 5' exonuclease activity. This Thermotoga petrophila (strain ATCC BAA-488 / DSM 13995 / JCM 10881 / RKU-1) protein is DNA polymerase III PolC-type.